Reading from the N-terminus, the 122-residue chain is Large ribosomal subunit protein uL14 (122 aa).

It belongs to the universal ribosomal protein uL14 family. Part of the 50S ribosomal subunit. Forms a cluster with proteins L3 and L19. In the 70S ribosome, L14 and L19 interact and together make contacts with the 16S rRNA in bridges B5 and B8.

Functionally, binds to 23S rRNA. Forms part of two intersubunit bridges in the 70S ribosome. In Kineococcus radiotolerans (strain ATCC BAA-149 / DSM 14245 / SRS30216), this protein is Large ribosomal subunit protein uL14.